The chain runs to 431 residues: BEL1-like homeodomain protein 5 (431 aa).

The SR/KY domain stretch occupies residues 80–96 (PIYLKAAQELLNEIVNV). The tract at residues 128–199 (GVAALQMKKA…AVKDMISLQI (72 aa)) is BELL domain. The homeobox DNA-binding region spans 228–290 (AWRPQRGLPE…NARVRMWKPL (63 aa)). Positions 302–312 (EESRKGSDRYS) are enriched in basic and acidic residues. The tract at residues 302–333 (EESRKGSDRYSTKGSSSKQPYNNTTSNESSNT) is disordered. Positions 313–322 (TKGSSSKQPY) are enriched in polar residues. Low complexity predominate over residues 323 to 333 (NNTTSNESSNT).

It belongs to the TALE/BELL homeobox family. May form heterodimeric complexes with TALE/KNOX proteins. Interacts with OFP1.

The protein localises to the nucleus. The chain is BEL1-like homeodomain protein 5 (BLH5) from Arabidopsis thaliana (Mouse-ear cress).